Reading from the N-terminus, the 103-residue chain is Large ribosomal subunit protein bL21 (103 aa).

The protein belongs to the bacterial ribosomal protein bL21 family. Part of the 50S ribosomal subunit. Contacts protein L20.

Its function is as follows. This protein binds to 23S rRNA in the presence of protein L20. The protein is Large ribosomal subunit protein bL21 of Pectobacterium carotovorum subsp. carotovorum (strain PC1).